The sequence spans 268 residues: TodF product hydratase (268 aa).

This sequence belongs to the hydratase/decarboxylase family.

The protein operates within xenobiotic degradation; toluene degradation. Functionally, converts the product of 2-hydroxy-6-oxo-2,4-heptadienoate hydrolase. The sequence is that of TodF product hydratase (todJ) from Pseudomonas putida (strain ATCC 700007 / DSM 6899 / JCM 31910 / BCRC 17059 / LMG 24140 / F1).